Consider the following 434-residue polypeptide: DNA primase large subunit PriL (434 aa).

[4Fe-4S] cluster-binding residues include Cys-281, Cys-392, Cys-403, and Cys-409.

It belongs to the eukaryotic-type primase large subunit family. In terms of assembly, heterodimer of a small subunit (PriS) and a large subunit (PriL). [4Fe-4S] cluster serves as cofactor.

In terms of biological role, regulatory subunit of DNA primase, an RNA polymerase that catalyzes the synthesis of short RNA molecules used as primers for DNA polymerase during DNA replication. Stabilizes and modulates the activity of the small subunit, increasing the rate of DNA synthesis, and conferring RNA synthesis capability. The DNA polymerase activity may enable DNA primase to also catalyze primer extension after primer synthesis. May also play a role in DNA repair. This Methanothermobacter thermautotrophicus (strain ATCC 29096 / DSM 1053 / JCM 10044 / NBRC 100330 / Delta H) (Methanobacterium thermoautotrophicum) protein is DNA primase large subunit PriL.